A 121-amino-acid chain; its full sequence is SVIELGKMIVQLTNKTPASYVSYGCFCGGGDRGKPKDATDRCCFVHSCCYDTLPDCSPKTDQYKYKWENGEIICENSTSCKKRICECDKAVAICLRENLKTYNKKYKIYPNILCRGEPDKC.

Intrachain disulfides connect cysteine 25–cysteine 114, cysteine 27–cysteine 43, cysteine 42–cysteine 94, cysteine 48–cysteine 121, cysteine 49–cysteine 87, cysteine 56–cysteine 80, and cysteine 74–cysteine 85. The interval 104–116 is important for membrane-damaging activities in eukaryotes and bacteria; heparin-binding; it reads KKYKIYPNILCRG.

This sequence belongs to the phospholipase A2 family. Group II subfamily. S49 sub-subfamily. As to quaternary structure, monomer. Expressed by the venom gland.

It localises to the secreted. Functionally, snake venom phospholipase A2 homolog that lacks enzymatic activity. Shows high myotoxin activities and displays edema-inducing activities. Has cytotoxic activities against HUVEC cells (LC(50)=4.9 uL) and human lung adenocarcinoma A549 cells (LC(50)=3.5 uL). The protein is Phospholipase A2 homolog ECO_00035 of Echis coloratus (Carpet viper).